A 570-amino-acid polypeptide reads, in one-letter code: MASLFSSRLGSQSLSLLINIFFIFLIFLHFASQTPPPSGSIQTLNSFAGGDSDSCSGGLASLDDHRSKCSYIRSQSKCGPQGYIDYLKIFFCIFGQSPVLGHLVLSAWLFVLFYLLGDTAASYFCPSLDSLSKVLKLSPTMAGVTLLSLGNGAPDLFSSVVSFTRSNNGDFGLNSILGGAFFVSSFVVGTICVLIGSRDVAIDRNSFIRDVVFLLVALCCLGLIIFIGKVTIWVALCYLSIYLLYVGFLSVSHFFDRKKRMSDQILRSREDLAEMGVSLLGYIAEEKLALPEKTTQEFKIVFEDSPKRHRSCFSVLVSIIGLPLYLPRRLTIPVVCEEKWSKPCAVVSTAIAPVLLTELYCSHYSGSQRNLILYIISGSIGLIVGILAYLTTEKSHPPKKFSLVWLLGGFTMSVTWTYMIAQELVSLLISLGNIFGISPSVLGLTVLAWGNSLGDLIANVTVAFHGGNDGAQIALSGCYAGPLFNTVIGLGVPLVISSLAEYPGVYIIPSDNSLLETLGFLMVGLLWALVIMPKKKMRLDKLVGGGLLAIYLCFLSLRLARVFGVLDTDR.

13 consecutive transmembrane segments (helical) span residues 14–34, 97–117, 141–161, 176–196, 212–232, 235–255, 344–364, 371–391, 401–421, 427–447, 479–499, 513–533, and 546–566; these read LSLLINIFFIFLIFLHFASQT, SPVLGHLVLSAWLFVLFYLLG, MAGVTLLSLGNGAPDLFSSVV, ILGGAFFVSSFVVGTICVLIG, VFLLVALCCLGLIIFIGKVTI, ALCYLSIYLLYVGFLSVSHFF, CAVVSTAIAPVLLTELYCSHY, LILYIISGSIGLIVGILAYLT, FSLVWLLGGFTMSVTWTYMIA, LLISLGNIFGISPSVLGLTVL, YAGPLFNTVIGLGVPLVISSL, SLLETLGFLMVGLLWALVIMP, and GLLAIYLCFLSLRLARVFGVL.

Belongs to the Ca(2+):cation antiporter (CaCA) (TC 2.A.19) family. Cation/calcium exchanger (CCX) subfamily. In terms of tissue distribution, expressed in roots, leaves, stems and flowers.

It is found in the vacuole membrane. Vacuolar membrane-localized H(+)-dependent K(+) and Na(+) transporter. This is Cation/calcium exchanger 1 (CCX1) from Arabidopsis thaliana (Mouse-ear cress).